The primary structure comprises 304 residues: C-type lectin domain-containing protein 141 (304 aa).

An N-terminal signal peptide occupies residues 1 to 19; it reads MRSSSTLLIAFGLFLASMS. Positions 29–100 are disordered; that stretch reads GSGGHRPPSS…TTPEPTTTKV (72 aa). The span at 51 to 99 shows a compositional bias: low complexity; sequence TKPPKSTSTPSTSTSTPTTTTTTTTTTTTTPTTTTTTTTTTTPEPTTTK.

The chain is C-type lectin domain-containing protein 141 (clec-141) from Caenorhabditis elegans.